The primary structure comprises 288 residues: Pyridoxal kinase PdxY (288 aa).

Substrate is bound by residues S10 and 45-46 (TQ). ATP is bound by residues D112, A143, E148, and K181. Substrate is bound at residue D222.

This sequence belongs to the pyridoxine kinase family. PdxY subfamily. Homodimer. It depends on Mg(2+) as a cofactor.

The enzyme catalyses pyridoxal + ATP = pyridoxal 5'-phosphate + ADP + H(+). It participates in cofactor metabolism; pyridoxal 5'-phosphate salvage; pyridoxal 5'-phosphate from pyridoxal: step 1/1. Pyridoxal kinase involved in the salvage pathway of pyridoxal 5'-phosphate (PLP). Catalyzes the phosphorylation of pyridoxal to PLP. The chain is Pyridoxal kinase PdxY from Paraburkholderia xenovorans (strain LB400).